Here is a 426-residue protein sequence, read N- to C-terminus: Serine--tRNA ligase (426 aa).

T233 to E235 is an L-serine binding site. R264–E266 serves as a coordination point for ATP. Residue E287 coordinates L-serine. E351 to S354 contacts ATP. L-serine is bound at residue S387.

The protein belongs to the class-II aminoacyl-tRNA synthetase family. Type-1 seryl-tRNA synthetase subfamily. In terms of assembly, homodimer. The tRNA molecule binds across the dimer.

The protein resides in the cytoplasm. The enzyme catalyses tRNA(Ser) + L-serine + ATP = L-seryl-tRNA(Ser) + AMP + diphosphate + H(+). The catalysed reaction is tRNA(Sec) + L-serine + ATP = L-seryl-tRNA(Sec) + AMP + diphosphate + H(+). It functions in the pathway aminoacyl-tRNA biosynthesis; selenocysteinyl-tRNA(Sec) biosynthesis; L-seryl-tRNA(Sec) from L-serine and tRNA(Sec): step 1/1. Functionally, catalyzes the attachment of serine to tRNA(Ser). Is also able to aminoacylate tRNA(Sec) with serine, to form the misacylated tRNA L-seryl-tRNA(Sec), which will be further converted into selenocysteinyl-tRNA(Sec). This is Serine--tRNA ligase from Xylella fastidiosa (strain M23).